Consider the following 245-residue polypeptide: 1-(5-phosphoribosyl)-5-[(5-phosphoribosylamino)methylideneamino] imidazole-4-carboxamide isomerase (245 aa).

The Proton acceptor role is filled by Asp7. Asp129 serves as the catalytic Proton donor.

It belongs to the HisA/HisF family.

The protein localises to the cytoplasm. The enzyme catalyses 1-(5-phospho-beta-D-ribosyl)-5-[(5-phospho-beta-D-ribosylamino)methylideneamino]imidazole-4-carboxamide = 5-[(5-phospho-1-deoxy-D-ribulos-1-ylimino)methylamino]-1-(5-phospho-beta-D-ribosyl)imidazole-4-carboxamide. It functions in the pathway amino-acid biosynthesis; L-histidine biosynthesis; L-histidine from 5-phospho-alpha-D-ribose 1-diphosphate: step 4/9. This Salmonella enteritidis PT4 (strain P125109) protein is 1-(5-phosphoribosyl)-5-[(5-phosphoribosylamino)methylideneamino] imidazole-4-carboxamide isomerase.